The following is a 304-amino-acid chain: Mitochondrial glycine transporter (304 aa).

Solcar repeat units follow at residues 3-82, 106-186, and 209-293; these read GKSK…VREA, ENLI…LKVA, and SSAM…LVKR. 6 helical membrane-spanning segments follow: residues 9–34, 57–83, 108–133, 161–184, 213–239, and 268–286; these read IYAG…TRVQ, GTLP…REAV, LISG…VRYE, GWAA…EQLK, INSV…KTRM, and GLAL…SWCI.

The protein belongs to the mitochondrial carrier (TC 2.A.29) family. SLC25A38 subfamily.

It localises to the mitochondrion inner membrane. The catalysed reaction is glycine(in) = glycine(out). Its function is as follows. Mitochondrial glycine transporter that imports glycine into the mitochondrial matrix. Plays an important role in providing glycine for the first enzymatic step in heme biosynthesis, the condensation of glycine with succinyl-CoA to produce 5-aminolevulinate (ALA) in the mitochondrial matrix. This is Mitochondrial glycine transporter from Yarrowia lipolytica (strain CLIB 122 / E 150) (Yeast).